The sequence spans 619 residues: MALVSVAPLVSMRRSLFSSPYELKSIDKTIPNLVMCRKRMSGTPSIRVSSTTSASNDDGVRRRVGDYRYNHWDDDLIDSLATSYEAPSYLERADTLVEAIKDRFNSMGVEDGERISPLTDLYQRLWMVDSVERLGIDRHFQNEIKSALDYVFSYWKEKGIGRGRQSAVTDLNSTALGFRTLRLHGYPVSSDVLENFKDHNGQFTCSGIQTEGEIRGVLNLFRASLIAFPGEKVMEEAEIFSTMYLKHALQKIAVSSLSQEIEYLLDYGWHTNLPRLEARMYMDVFPQDTIYEQKLVELAKVEFNIFHSLQKRELQSLTRWWKHYGFPQLSFTRHIHVEYYTFASCVATDPKQSAFRLGFAKMSHFVTVLDDIYDTYGTMEELELFTAAIKRWDPSLVDCLPEYMKGVYMAVYDTVNEMAKEAEKVQGRDTLNYVRQAWEPYFDAYMIEAKWISSGYLPTFQEYLDNSKISFGSRITILQPILTLGEPLPHEILQEIDFPSKFNDLISVLLRLKGDTRCYKADRARGEEASSVSCYMKDNAGLTEEDAIHRINAMVHNLLKELNWELLKPDCNVPISCKKAAFDICRIFHHGYKYRDGYGDATIETKNLVKRTVLEPVPL.

The transit peptide at 1 to 47 (MALVSVAPLVSMRRSLFSSPYELKSIDKTIPNLVMCRKRMSGTPSIR) directs the protein to the chloroplast. 3 residues coordinate Mg(2+): aspartate 370, aspartate 374, and aspartate 522. The DDXXD motif motif lies at 370–374 (DDIYD).

The protein belongs to the terpene synthase family. Tpsd subfamily. Mg(2+) serves as cofactor. It depends on Mn(2+) as a cofactor.

The protein resides in the plastid. It localises to the chloroplast. It carries out the reaction (2E)-geranyl diphosphate = (1S,4R)-camphene + diphosphate. The enzyme catalyses (2E)-geranyl diphosphate = (1R,5R)-alpha-pinene + diphosphate. It catalyses the reaction (2E)-geranyl diphosphate = tricyclene + diphosphate. The catalysed reaction is (2E)-geranyl diphosphate = beta-myrcene + diphosphate. It carries out the reaction (2E)-geranyl diphosphate = (1S,5S)-beta-pinene + diphosphate. The enzyme catalyses (2E)-geranyl diphosphate = (1S,5S)-alpha-pinene + diphosphate. It participates in terpene metabolism; oleoresin biosynthesis. Its pathway is secondary metabolite biosynthesis; terpenoid biosynthesis. Its function is as follows. Monoterpene synthase (TPS) involved in the biosynthesis of monoterpene natural products included in conifer oleoresin secretions and volatile emissions; these compounds contribute to biotic and abiotic stress defense against herbivores and pathogens. Catalyzes the conversion of (2E)-geranyl diphosphate (GPP) to (-)-camphene, (+)-alpha-pinene and (-)-alpha-pinene, and, to a lower extent, to tricyclene, myrcene and (-)-beta-pinene. The protein is (-)-camphene synthase, chloroplastic of Pinus contorta (Shore pine).